The sequence spans 436 residues: Trigger factor (436 aa).

A PPIase FKBP-type domain is found at glutamate 161–proline 246.

Belongs to the FKBP-type PPIase family. Tig subfamily.

It localises to the cytoplasm. It catalyses the reaction [protein]-peptidylproline (omega=180) = [protein]-peptidylproline (omega=0). Its function is as follows. Involved in protein export. Acts as a chaperone by maintaining the newly synthesized protein in an open conformation. Functions as a peptidyl-prolyl cis-trans isomerase. In Pseudomonas savastanoi pv. phaseolicola (strain 1448A / Race 6) (Pseudomonas syringae pv. phaseolicola (strain 1448A / Race 6)), this protein is Trigger factor.